The sequence spans 172 residues: MNQDHPEFDSEDLSQNPPETDPLKAEIESLRSEIALVKADALRERADLENQRKRIARDVENARKFANEKLLGELLPVFDSLDAGLTAAGTEPSPLRDGLDMTYKQLLKVAADNGLTLLDPVGQPFNPDQHQAISQGEAEGVAPGHVVQVFQKGYLLNDRLLRPALVVVAKHD.

The tract at residues 1 to 23 (MNQDHPEFDSEDLSQNPPETDPL) is disordered.

The protein belongs to the GrpE family. As to quaternary structure, homodimer.

The protein localises to the cytoplasm. Functionally, participates actively in the response to hyperosmotic and heat shock by preventing the aggregation of stress-denatured proteins, in association with DnaK and GrpE. It is the nucleotide exchange factor for DnaK and may function as a thermosensor. Unfolded proteins bind initially to DnaJ; upon interaction with the DnaJ-bound protein, DnaK hydrolyzes its bound ATP, resulting in the formation of a stable complex. GrpE releases ADP from DnaK; ATP binding to DnaK triggers the release of the substrate protein, thus completing the reaction cycle. Several rounds of ATP-dependent interactions between DnaJ, DnaK and GrpE are required for fully efficient folding. The chain is Protein GrpE from Xanthomonas axonopodis pv. citri (strain 306).